Here is a 55-residue protein sequence, read N- to C-terminus: Small integral membrane protein 11 (55 aa).

The helical transmembrane segment at V9–G29 threads the bilayer. Residues Q34–A54 are a coiled coil.

Expressed in brain, heart, kidney, thymus, liver, stomach, muscle, lung, testis, ovary, skin and eye.

Its subcellular location is the membrane. This chain is Small integral membrane protein 11, found in Mus musculus (Mouse).